Consider the following 96-residue polypeptide: Large ribosomal subunit protein bL28 (96 aa).

The disordered stretch occupies residues 1 to 23; that stretch reads MSRVCELSGKAPMTGNTVSHANN.

It belongs to the bacterial ribosomal protein bL28 family.

This Cereibacter sphaeroides (strain ATCC 17029 / ATH 2.4.9) (Rhodobacter sphaeroides) protein is Large ribosomal subunit protein bL28.